Consider the following 325-residue polypeptide: MATH domain and coiled-coil domain-containing protein At3g58430 (325 aa).

Residues 6-131 form the MATH domain; the sequence is HKKFCWIIKN…KGDFKIIAEV (126 aa). A coiled-coil region spans residues 258–306; sequence FKVDWLEKKLDQVKDKKEREQSGLARLHELEEYLLKLKQKCSNLDLLVE.

This is MATH domain and coiled-coil domain-containing protein At3g58430 from Arabidopsis thaliana (Mouse-ear cress).